The following is a 330-amino-acid chain: MNTLGSGLKIIGSGTAIADQSLTNQDLSNIVETSDEWIQSRTGMRQRYICSAQENLASLGVKAGQKALAMAGLQPEDLDLIILATSTPDDLFGTAAQIQGGLGATRAFAFDITAACSGFVVGLNVAAQFLRTGVYQRVLIVGGDVLSRWVDWSDRTTCVLFGDGAGAVVLQRQAQDNLLAFEMYTDGTGNGCLNLSYQANPQPLTAEKTVAQGTYQAITMNGREVYRFAVAKVPEIIEKVLFKAQLTTSDLDWVILHQANQRIMDAVGDRLGIPSEKIISNVGEYGNTSAASIPLALDQAVREGKIKEGDLIALAGFGAGLTWAASIVRW.

Catalysis depends on residues cysteine 116 and histidine 257. The segment at 258-262 (QANQR) is ACP-binding. The active site involves asparagine 287.

It belongs to the thiolase-like superfamily. FabH family. As to quaternary structure, homodimer.

The protein resides in the cytoplasm. It catalyses the reaction malonyl-[ACP] + acetyl-CoA + H(+) = 3-oxobutanoyl-[ACP] + CO2 + CoA. It functions in the pathway lipid metabolism; fatty acid biosynthesis. Its function is as follows. Catalyzes the condensation reaction of fatty acid synthesis by the addition to an acyl acceptor of two carbons from malonyl-ACP. Catalyzes the first condensation reaction which initiates fatty acid synthesis and may therefore play a role in governing the total rate of fatty acid production. Possesses both acetoacetyl-ACP synthase and acetyl transacylase activities. Its substrate specificity determines the biosynthesis of branched-chain and/or straight-chain of fatty acids. The polypeptide is Beta-ketoacyl-[acyl-carrier-protein] synthase III (Synechocystis sp. (strain ATCC 27184 / PCC 6803 / Kazusa)).